The following is a 574-amino-acid chain: Probable inactive serine/threonine-protein kinase slob2 (574 aa).

Residues 6–26 (YIIIAAVGGFAILTFIIIVVL) traverse the membrane as a helical segment. The Protein kinase domain occupies 166–346 (YADRGSLRDF…PLHRLTYTSR (181 aa)). A glycan (N-linked (GlcNAc...) asparagine) is linked at Asn-358. Residues 366–386 (SKPNSKDLSQPKLKDLKKQKK) form a disordered region. 8 N-linked (GlcNAc...) asparagine glycosylation sites follow: Asn-440, Asn-449, Asn-453, Asn-456, Asn-464, Asn-470, Asn-477, and Asn-483. The span at 450-493 (TTTNTTNTSTSSSLNSSFNSNVSTSYSNATTTTNTTSASSVSPP) shows a compositional bias: low complexity. Residues 450–574 (TTTNTTNTST…DKSGPLLKKS (125 aa)) form a disordered region. A compositionally biased stretch (pro residues) spans 494–539 (ISSPPPPPPPPPPSKSSGPPPPPPPPPKSSGPPPPPPPKSSPPPPA). Low complexity predominate over residues 546-556 (LLSSIESFSSS).

It belongs to the protein kinase superfamily. Ser/Thr protein kinase family.

It localises to the membrane. The protein is Probable inactive serine/threonine-protein kinase slob2 (slob2) of Dictyostelium discoideum (Social amoeba).